Consider the following 555-residue polypeptide: Glycerol dehydratase large subunit (555 aa).

This sequence belongs to the diol/glycerol dehydratase large subunit family. Probably consists of three subunits: large, medium, and small. It depends on adenosylcob(III)alamin as a cofactor.

The enzyme catalyses glycerol = 3-hydroxypropanal + H2O. This chain is Glycerol dehydratase large subunit (dhaB), found in Citrobacter freundii.